A 261-amino-acid polypeptide reads, in one-letter code: Probable trans-aconitate 2-methyltransferase (261 aa).

The protein belongs to the methyltransferase superfamily. Tam family.

It localises to the cytoplasm. The catalysed reaction is trans-aconitate + S-adenosyl-L-methionine = (E)-3-(methoxycarbonyl)pent-2-enedioate + S-adenosyl-L-homocysteine. In terms of biological role, catalyzes the S-adenosylmethionine monomethyl esterification of trans-aconitate. The polypeptide is Probable trans-aconitate 2-methyltransferase (Mycobacterium bovis (strain ATCC BAA-935 / AF2122/97)).